The chain runs to 268 residues: Undecaprenyl-diphosphatase (268 aa).

The next 7 membrane-spanning stretches (helical) occupy residues 7-27, 87-107, 116-136, 146-166, 187-207, 210-230, and 247-267; these read IFNA…PISS, LIYH…LCIY, FYSI…TEIS, IETP…WPGF, VEFS…LDVI, FYDI…SAFI, and SLIP…LFFM.

This sequence belongs to the UppP family.

It is found in the cell membrane. The enzyme catalyses di-trans,octa-cis-undecaprenyl diphosphate + H2O = di-trans,octa-cis-undecaprenyl phosphate + phosphate + H(+). In terms of biological role, catalyzes the dephosphorylation of undecaprenyl diphosphate (UPP). Confers resistance to bacitracin. The chain is Undecaprenyl-diphosphatase from Buchnera aphidicola subsp. Baizongia pistaciae (strain Bp).